A 133-amino-acid polypeptide reads, in one-letter code: Fluoride-specific ion channel FluC (133 aa).

The next 4 membrane-spanning stretches (helical) occupy residues leucine 4–leucine 24, tryptophan 35–alanine 55, valine 66–serine 86, and valine 107–proline 127. Glycine 74 and threonine 77 together coordinate Na(+).

It belongs to the fluoride channel Fluc/FEX (TC 1.A.43) family.

Its subcellular location is the cell inner membrane. It catalyses the reaction fluoride(in) = fluoride(out). Na(+) is not transported, but it plays an essential structural role and its presence is essential for fluoride channel function. Its function is as follows. Fluoride-specific ion channel. Important for reducing fluoride concentration in the cell, thus reducing its toxicity. The sequence is that of Fluoride-specific ion channel FluC from Salinibacter ruber (strain DSM 13855 / M31).